The sequence spans 64 residues: Large ribosomal subunit protein bL35 (64 aa).

The interval 1–43 (MPKMKSKKSLAKRVIAKKNGTLKRGKAYRSHRATGKTTKQKRH) is disordered.

It belongs to the bacterial ribosomal protein bL35 family.

The protein is Large ribosomal subunit protein bL35 of Mesoplasma florum (strain ATCC 33453 / NBRC 100688 / NCTC 11704 / L1) (Acholeplasma florum).